A 381-amino-acid polypeptide reads, in one-letter code: L-lactate dehydrogenase (381 aa).

Positions 1 to 380 constitute an FMN hydroxy acid dehydrogenase domain; that stretch reads MIISASTDYR…NRDSLAVSER (380 aa). Tyr24 serves as a coordination point for substrate. The FMN site is built by Ser106 and Gln127. Tyr129 is a substrate binding site. An FMN-binding site is contributed by Thr155. Arg164 is a binding site for substrate. Lys251 contacts FMN. His275 functions as the Proton acceptor in the catalytic mechanism. Arg278 is a binding site for substrate. Residue 306–330 participates in FMN binding; the sequence is DSGIRTGLDVVRMIALGADSVLLGR.

This sequence belongs to the FMN-dependent alpha-hydroxy acid dehydrogenase family. It depends on FMN as a cofactor.

The protein resides in the cell inner membrane. The enzyme catalyses (S)-lactate + A = pyruvate + AH2. Its function is as follows. Catalyzes the conversion of L-lactate to pyruvate. Is coupled to the respiratory chain. In Yersinia pseudotuberculosis serotype O:1b (strain IP 31758), this protein is L-lactate dehydrogenase.